Here is a 1034-residue protein sequence, read N- to C-terminus: Translation initiation factor IF-2 (1034 aa).

Disordered regions lie at residues 118-140 (AAEAVDMQPESVEAQAPAPQSVE) and 154-446 (EAEA…NESA). Low complexity-rich tracts occupy residues 162–178 (TPPVETPAVEAVEAAAP) and 212–228 (PAVKAEAEPQSAQPAAS). Over residues 304–315 (DRAREDARRAAE) the composition is skewed to basic and acidic residues. One can recognise a tr-type G domain in the interval 535–702 (PRAPVVTVMG…NVLLQAEILE (168 aa)). A G1 region spans residues 544 to 551 (GHVDHGKT). 544 to 551 (GHVDHGKT) provides a ligand contact to GTP. The tract at residues 569 to 573 (GITQH) is G2. The interval 590-593 (DTPG) is G3. Residues 590-594 (DTPGH) and 644-647 (NKID) contribute to the GTP site. A G4 region spans residues 644–647 (NKID). Residues 680–682 (SAK) are G5.

The protein belongs to the TRAFAC class translation factor GTPase superfamily. Classic translation factor GTPase family. IF-2 subfamily.

It is found in the cytoplasm. One of the essential components for the initiation of protein synthesis. Protects formylmethionyl-tRNA from spontaneous hydrolysis and promotes its binding to the 30S ribosomal subunits. Also involved in the hydrolysis of GTP during the formation of the 70S ribosomal complex. The polypeptide is Translation initiation factor IF-2 (Bordetella avium (strain 197N)).